Reading from the N-terminus, the 213-residue chain is Thymidylate kinase (213 aa).

10–17 (GLEGAGKT) is a binding site for ATP.

Belongs to the thymidylate kinase family.

The catalysed reaction is dTMP + ATP = dTDP + ADP. Functionally, phosphorylation of dTMP to form dTDP in both de novo and salvage pathways of dTTP synthesis. This Escherichia coli O157:H7 (strain EC4115 / EHEC) protein is Thymidylate kinase.